A 129-amino-acid polypeptide reads, in one-letter code: UPF0102 protein Mrad2831_2938 (129 aa).

It belongs to the UPF0102 family.

This chain is UPF0102 protein Mrad2831_2938, found in Methylobacterium radiotolerans (strain ATCC 27329 / DSM 1819 / JCM 2831 / NBRC 15690 / NCIMB 10815 / 0-1).